A 1770-amino-acid chain; its full sequence is AF4/FMR2 family member lilli (1770 aa).

3 stretches are compositionally biased toward low complexity: residues 1 to 19 (MAQQQQQQQQQQHLQHPHQ), 154 to 204 (LGHS…YLKQ), and 227 to 269 (PSSS…GTTP). 6 disordered regions span residues 1–28 (MAQQQQQQQQQQHLQHPHQNTNSNNQLQ), 134–327 (SRHA…EKDI), 402–660 (TSLL…PGNV), 761–805 (LHSA…LQLP), 822–1173 (MQKA…KQGQ), and 1291–1390 (KHEH…QISK). A compositionally biased stretch (polar residues) spans 402 to 414 (TSLLTTPPHASQG). Low complexity predominate over residues 434–447 (KAAAALSPTAAAKP). The segment covering 448–461 (LKTEKNHTLEKQDS) has biased composition (basic and acidic residues). Residues 463–474 (LENDLELSESED) show a composition bias toward acidic residues. 2 positions are modified to phosphoserine: Ser470 and Ser472. Residues 483-503 (SAGNSSNSSESDSSESGSESS) show a composition bias toward low complexity. Basic residues predominate over residues 511–520 (QHHHHNHHHQ). Residues 521–552 (QQQQQLQQQQQQQLLQQKQQHQQILQQQQRQL) are compositionally biased toward low complexity. A compositionally biased stretch (gly residues) spans 582–614 (FGSGGAGNGGCSTASSGGGGGGSGSGGGSGSSS). Low complexity predominate over residues 615–625 (GIGTMSSGSSS). Polar residues-rich tracts occupy residues 626–638 (NKTPSPTESNKWT) and 647–659 (ANQTSSESVSPGN). The segment covering 768-800 (SDSGTSGSGSTSSSSSSSDSAPGEVVPMPGPGE) has biased composition (low complexity). Residues 844–854 (QRQKKPRKKKP) are compositionally biased toward basic residues. 2 positions are modified to phosphoserine: Ser863 and Ser864. Composition is skewed to low complexity over residues 880–893 (AAAAAAAQAQATAT), 909–928 (QQQSGGSGNLSSASAGSSSQ), 994–1028 (ANASAVAAASSSSDEDSSSSTGSTGSKSSSSSSSS), 1071–1081 (SGSSSPSSSSS), and 1111–1131 (SQHSQQLSSSECSSSSGSSTS). A DNA-binding region (a.T hook) is located at residues 900 to 912 (KKGRGRPRKQQQS). Ser920 and Ser922 each carry phosphoserine. Basic and acidic residues-rich tracts occupy residues 1295-1312 (PHPVKPEPELDAGYESKF) and 1321-1355 (FQLKQERDRERERERDRDRERERERERDREREREQ). Ser1442 is modified (phosphoserine). 2 stretches are compositionally biased toward low complexity: residues 1483-1499 (AAATATAATSTTGTSTA) and 1656-1676 (GNTPSSISPSNSVGSQGSGSN). Disordered regions lie at residues 1483 to 1502 (AAATATAATSTTGTSTAPPA) and 1656 to 1683 (GNTPSSISPSNSVGSQGSGSNTPPGKIV).

Belongs to the AF4 family.

The protein localises to the nucleus. In terms of biological role, has a role in transcriptional regulation. Acts in parallel with the Ras/MAPK and the PI3K/PKB pathways in the control of cell identity and cellular growth. Essential for regulation of the cytoskeleton and cell growth but not for cell proliferation or growth rate. Required specifically for the microtubule-based basal transport of lipid droplets. Plays a partially redundant function downstream of Raf in cell fate specification in the developing eye. Pair-rule protein that regulates embryonic cellularization, gastrulation and segmentation. The protein is AF4/FMR2 family member lilli of Drosophila pseudoobscura pseudoobscura (Fruit fly).